Consider the following 256-residue polypeptide: Ethylene-responsive transcription factor ERF084 (256 aa).

A DNA-binding region (AP2/ERF) is located at residues 115–172; the sequence is GFMGVRKRPWGRWSAEIRDRIGRCRHWLGTFDTAEEAARAYDAAARRLRGTKAKTNFV.

Belongs to the AP2/ERF transcription factor family. ERF subfamily.

It localises to the nucleus. In terms of biological role, probably acts as a transcriptional activator. Binds to the GCC-box pathogenesis-related promoter element. May be involved in the regulation of gene expression by stress factors and by components of stress signal transduction pathways. The protein is Ethylene-responsive transcription factor ERF084 (ERF084) of Arabidopsis thaliana (Mouse-ear cress).